Here is a 478-residue protein sequence, read N- to C-terminus: Ninja-family protein 7 (478 aa).

3 disordered regions span residues Met-1 to Gly-247, Ser-336 to Ala-374, and Asp-454 to Asn-478. Positions Lys-23–Pro-35 are enriched in basic and acidic residues. Positions Ile-169–Gly-179 are enriched in polar residues. Positions Glu-180–Ala-189 are enriched in acidic residues. Low complexity predominate over residues Ser-233 to Gly-242. Residues Ala-339–Glu-359 show a composition bias toward basic and acidic residues.

This sequence belongs to the Ninja family.

It is found in the nucleus. This Zea mays (Maize) protein is Ninja-family protein 7.